A 434-amino-acid polypeptide reads, in one-letter code: MADETFKYVILGGGVAAGYAAREFVKQGLNPGELAIISKEAVAPYERPALSKAYLFPESPARLPGFHVCVGSGGERLLPDWYKEKGIELILSTEIVEADLPAKRLRSAHGKIYNYQTLIIATGSTVIKLSDFGVQGADAKNIFYLREIDDADQLVEAIKAKENGKVVVVGGGYIGLELGAALRINNFDVSMVYPEPWCMPRLFTPEIAAFYEGYYAQKGITIIKGTVAVGFTVDTNGEVKEVKLKDGRVLEADIVVVGVGARPLTSLFKGQIVEEKGGIKTDEFFKTSVPDVYAVGDVATFPLKLYNELRRVEHVDHSRKSAEQAVKAIKASEEGKAIEEYDYLPYFYSRSFDLSWQFYGDNVGDAVLFGDNSPDSATHKFGSYWIKDGKVVGAFLESGSPEENKAIAKVARIQPSVESSDLLLKEGISFASKV.

Residues 13–16 (GGVA), Glu-40, Arg-47, Lys-52, Ile-95, and 146–147 (RE) contribute to the FAD site. NAD(+)-binding positions include 171–177 (GGYIGLE), Glu-195, Arg-201, and Gly-260. Position 173 to 177 (173 to 177 (YIGLE)) interacts with NADP(+). The NADP(+) site is built by Arg-201 and Gly-260. Asp-297 lines the FAD pocket. Residue 313–314 (EH) coordinates NAD(+). 313–314 (EH) contacts NADP(+). Val-315 contributes to the FAD binding site. Residue Arg-319 coordinates L-ascorbate. Residue Tyr-348 coordinates FAD. Tyr-348 lines the NAD(+) pocket. Residue Tyr-348 participates in NADP(+) binding. Arg-350 contacts L-ascorbate.

The protein belongs to the FAD-dependent oxidoreductase family. FAD is required as a cofactor.

Its subcellular location is the cytoplasm. The enzyme catalyses 2 monodehydro-L-ascorbate radical + NADH + H(+) = 2 L-ascorbate + NAD(+). Its function is as follows. Catalyzes the conversion of monodehydroascorbate to ascorbate, oxidizing NADH in the process. The protein is Monodehydroascorbate reductase, seedling isozyme of Cucumis sativus (Cucumber).